The following is a 121-amino-acid chain: Flagellar protein FliT (121 aa).

The segment at 1 to 50 (MNHAPHLYFAWQQLVDKSQLMLRLATEEQWDELIASEMAYVNAVQEIAHL) is required for homodimerization. The tract at residues 60-98 (MQEQLRPMLRLILDNESKVKQLLQIRMDELAKLVGQSSV) is fliD binding.

The protein belongs to the FliT family. Homodimer. Interacts with FliD and FlhC.

The protein localises to the cytoplasm. The protein resides in the cytosol. Dual-function protein that regulates the transcription of class 2 flagellar operons and that also acts as an export chaperone for the filament-capping protein FliD. As a transcriptional regulator, acts as an anti-FlhDC factor; it directly binds FlhC, thus inhibiting the binding of the FlhC/FlhD complex to class 2 promoters, resulting in decreased expression of class 2 flagellar operons. As a chaperone, effects FliD transition to the membrane by preventing its premature polymerization, and by directing it to the export apparatus. This Shigella sonnei (strain Ss046) protein is Flagellar protein FliT.